A 152-amino-acid chain; its full sequence is MIGRIIRLYRKRKGYSINQLAVESGVSKSYLSKIERGVHTNPSVQFLKKVSATLEVELTELFDAETMMYEKISGGEEEWRVHLVQAVQAGMEKEELFTFTNRLKKEQPETASYRNRKLTESNIEEWKALMAEAREIGLSVHEVKSFLKTKGR.

The HTH cro/C1-type domain occupies 6 to 61 (IRLYRKRKGYSINQLAVESGVSKSYLSKIERGVHTNPSVQFLKKVSATLEVELTEL). The segment at residues 17-36 (INQLAVESGVSKSYLSKIER) is a DNA-binding region (H-T-H motif). Residues 113 to 151 (YRNRKLTESNIEEWKALMAEAREIGLSVHEVKSFLKTKG) form the Sin domain.

In terms of assembly, component of the SlrR/SlrA complex.

Its function is as follows. Represses sigma(D)-dependent flagellar genes and activate the eps and yqxM operons. Repressor activity is regulated by SlrA. Controls the initiation of biofilm formation. This chain is HTH-type transcriptional regulator SlrR (slrR), found in Bacillus subtilis (strain 168).